Here is a 452-residue protein sequence, read N- to C-terminus: UDP-glycosyltransferase 76E4 (452 aa).

Residues threonine 274, alanine 333–glutamine 335, histidine 350–glutamate 358, and glutamine 372–glutamine 375 each bind UDP-alpha-D-glucose.

This sequence belongs to the UDP-glycosyltransferase family.

The protein is UDP-glycosyltransferase 76E4 (UGT76E4) of Arabidopsis thaliana (Mouse-ear cress).